A 793-amino-acid chain; its full sequence is Meiosis-specific protein ASY3 (793 aa).

4 disordered regions span residues 1-40, 58-97, 110-287, and 305-586; these read MSDYRSFGSNYHPSSQSRKISIGVMADSQPKRNLVPDKDD, LQANKKEKSDLAAKQRNSAQVTGHVTSPWRSPRSSHRKLG, LSGS…KAGA, and EGLR…KRNS. A compositionally biased stretch (polar residues) spans 7–19; the sequence is FGSNYHPSSQSRK. Residues 60–70 show a composition bias toward basic and acidic residues; that stretch reads ANKKEKSDLAA. Residues 72–86 show a composition bias toward polar residues; the sequence is QRNSAQVTGHVTSPW. Residues 110 to 122 show a composition bias toward low complexity; it reads LSGSKGLNKGLNG. Residues 131–142 are compositionally biased toward polar residues; sequence SFQNCPISSPQH. Basic and acidic residues-rich tracts occupy residues 151-165 and 177-187; these read RNDRVMDRSPERMEE and SQREKMDKPGK. The span at 209 to 219 shows a compositional bias: polar residues; it reads PANNEDVNSET. Positions 221–248 are enriched in basic and acidic residues; that stretch reads EVEKTNFKLSQDKGSNDDPLIKPRHNSD. Residues 322-341 show a composition bias toward basic residues; sequence KKQRGRRKNTVVKCRKAHSR. Basic and acidic residues-rich tracts occupy residues 342-354, 363-385, 392-407, and 424-441; these read KKDEADWSRKEAS, ESTETGKRSSSSDKKGSSHDLHP, QKPDISTREGDFHPSP, and NGDKHERPSNIFREKSVE. Low complexity-rich tracts occupy residues 455 to 470 and 491 to 502; these read APISSPSPCCSPEASP and GTKKTSQGTTGQ. 2 stretches are compositionally biased toward basic and acidic residues: residues 505–527 and 541–553; these read DTEKRLPDFLEKKRDYSFRRESS and SDERDSDGSREDS. The stretch at 682-745 forms a coiled coil; it reads SNLAKTKRKH…KGSIKKQRTS (64 aa).

Interacts with ASY1.

Its subcellular location is the chromosome. It localises to the nucleus. Functionally, required for normal meiosis in male and female gametophytes. Acts with ASY1 at the interface between the developing chromosome axes and the recombination machinery to ensure interhomolog recombination. Required for synaptonemal complex formation during meiosis. The polypeptide is Meiosis-specific protein ASY3 (Arabidopsis thaliana (Mouse-ear cress)).